The following is a 446-amino-acid chain: Coiled-coil domain-containing protein 112 (446 aa).

Coiled coils occupy residues 35-116 (KTER…RKID) and 219-400 (ERKK…NVSR). Disordered regions lie at residues 253–272 (FHNK…KKQK) and 390–430 (LKEK…LLHI). Basic and acidic residues predominate over residues 255–268 (NKQEDNQKQKEEQR).

The protein localises to the cytoplasm. It is found in the cytoskeleton. Its subcellular location is the microtubule organizing center. The protein resides in the centrosome. It localises to the centriolar satellite. This chain is Coiled-coil domain-containing protein 112 (CCDC112), found in Homo sapiens (Human).